We begin with the raw amino-acid sequence, 451 residues long: D-inositol 3-phosphate glycosyltransferase (451 aa).

1D-myo-inositol 3-phosphate is bound at residue H37. UDP-N-acetyl-alpha-D-glucosamine-binding positions include 43–44 (QP) and G51. Residues 48 to 53 (DAGGMN), K106, Y138, T162, and R182 contribute to the 1D-myo-inositol 3-phosphate site. Positions 259, 264, and 323 each coordinate UDP-N-acetyl-alpha-D-glucosamine. Mg(2+)-binding residues include Y332, R333, and A335. Residues E345 and E353 each coordinate UDP-N-acetyl-alpha-D-glucosamine. Mg(2+) is bound at residue T359.

It belongs to the glycosyltransferase group 1 family. MshA subfamily. As to quaternary structure, homodimer.

It catalyses the reaction 1D-myo-inositol 3-phosphate + UDP-N-acetyl-alpha-D-glucosamine = 1D-myo-inositol 2-acetamido-2-deoxy-alpha-D-glucopyranoside 3-phosphate + UDP + H(+). Functionally, catalyzes the transfer of a N-acetyl-glucosamine moiety to 1D-myo-inositol 3-phosphate to produce 1D-myo-inositol 2-acetamido-2-deoxy-glucopyranoside 3-phosphate in the mycothiol biosynthesis pathway. The protein is D-inositol 3-phosphate glycosyltransferase of Corynebacterium kroppenstedtii (strain DSM 44385 / JCM 11950 / CIP 105744 / CCUG 35717).